Consider the following 312-residue polypeptide: 4-diphosphocytidyl-2-C-methyl-D-erythritol kinase (312 aa).

K16 is an active-site residue. Residue P101–S111 participates in ATP binding. D143 is an active-site residue.

The protein belongs to the GHMP kinase family. IspE subfamily.

It carries out the reaction 4-CDP-2-C-methyl-D-erythritol + ATP = 4-CDP-2-C-methyl-D-erythritol 2-phosphate + ADP + H(+). It functions in the pathway isoprenoid biosynthesis; isopentenyl diphosphate biosynthesis via DXP pathway; isopentenyl diphosphate from 1-deoxy-D-xylulose 5-phosphate: step 3/6. Its function is as follows. Catalyzes the phosphorylation of the position 2 hydroxy group of 4-diphosphocytidyl-2C-methyl-D-erythritol. The chain is 4-diphosphocytidyl-2-C-methyl-D-erythritol kinase from Prochlorococcus marinus subsp. pastoris (strain CCMP1986 / NIES-2087 / MED4).